Reading from the N-terminus, the 486-residue chain is MTFEDLRQKLKSGEVSSKELVQEKINRINELDPTLNSFLIVNTELALSKAEHIDKQIASGDHLPPLSGIPIAIKDNLCTKGIKTTCASKILDNFVPPYESTVTKKLLNAGAIMIGKTNMDEFAMGSSTETSAFGPTLNPWNITKVPGGSSGGSAASVAAGLCYGSLGSDTGGSIRQPASFCGVVGMKPTYGRVSRWGLIAFASSLDQVGPFANNVSDAAEILQVISGKDELDSTTVDIPVPNYLETLSKSIKGMKIGLIDNCFDHEGLATDVKESVLSSASLLENLGAEIVNISCPRFNDGIATYYVIAPSEASANLARYDGVKYGFRAEDEQSLIEMTSKSRALGFGSEVKRRILIGTYALSAGYVDAYYKKAQQVRTLIRRDFDDAFKKVDVLLAPTAPTTAFGSGDNIDNPMAMYLSDLLTIPANLAGLPAISLPCGFDKYGLPIGLQLIGNVFEEGKLFQVANQFEKAAEVYKNRPKTDFTL.

Active-site charge relay system residues include K74 and S149. Catalysis depends on S173, which acts as the Acyl-ester intermediate.

This sequence belongs to the amidase family. GatA subfamily. In terms of assembly, heterotrimer of A, B and C subunits.

It carries out the reaction L-glutamyl-tRNA(Gln) + L-glutamine + ATP + H2O = L-glutaminyl-tRNA(Gln) + L-glutamate + ADP + phosphate + H(+). Its function is as follows. Allows the formation of correctly charged Gln-tRNA(Gln) through the transamidation of misacylated Glu-tRNA(Gln) in organisms which lack glutaminyl-tRNA synthetase. The reaction takes place in the presence of glutamine and ATP through an activated gamma-phospho-Glu-tRNA(Gln). This chain is Glutamyl-tRNA(Gln) amidotransferase subunit A, found in Prochlorococcus marinus (strain NATL2A).